Here is a 520-residue protein sequence, read N- to C-terminus: Protein-export membrane protein SecD (520 aa).

The next 6 helical transmembrane spans lie at 10–30 (IILL…PTLA), 364–384 (DSLL…FLRY), 391–411 (LPMI…AAGI), 417–437 (LSVI…LVII), 461–481 (FWVI…LAIL), and 483–503 (LGDL…GVLI).

The protein belongs to the SecD/SecF family. SecD subfamily. As to quaternary structure, part of the protein translocation apparatus. Forms a complex with SecF.

It is found in the cell membrane. Involved in protein export. In Haloquadratum walsbyi (strain DSM 16790 / HBSQ001), this protein is Protein-export membrane protein SecD.